Consider the following 503-residue polypeptide: Probable cytosol aminopeptidase (503 aa).

The Mn(2+) site is built by K268 and D273. The active site involves K280. 3 residues coordinate Mn(2+): D291, D350, and E352. The active site involves R354.

The protein belongs to the peptidase M17 family. Mn(2+) is required as a cofactor.

It localises to the cytoplasm. It carries out the reaction Release of an N-terminal amino acid, Xaa-|-Yaa-, in which Xaa is preferably Leu, but may be other amino acids including Pro although not Arg or Lys, and Yaa may be Pro. Amino acid amides and methyl esters are also readily hydrolyzed, but rates on arylamides are exceedingly low.. It catalyses the reaction Release of an N-terminal amino acid, preferentially leucine, but not glutamic or aspartic acids.. In terms of biological role, presumably involved in the processing and regular turnover of intracellular proteins. Catalyzes the removal of unsubstituted N-terminal amino acids from various peptides. The polypeptide is Probable cytosol aminopeptidase (Nocardia farcinica (strain IFM 10152)).